We begin with the raw amino-acid sequence, 753 residues long: 5-methyltetrahydropteroyltriglutamate--homocysteine methyltransferase (753 aa).

5-methyltetrahydropteroyltri-L-glutamate contacts are provided by residues 19-22 and Arg-113; that span reads RELK. L-homocysteine contacts are provided by residues 430–432 and Glu-483; that span reads IGS. Residues 430-432 and Glu-483 contribute to the L-methionine site; that span reads IGS. 5-methyltetrahydropteroyltri-L-glutamate-binding positions include 514–515 and Trp-560; that span reads RC. Asp-598 provides a ligand contact to L-homocysteine. Asp-598 is an L-methionine binding site. Glu-604 lines the 5-methyltetrahydropteroyltri-L-glutamate pocket. The Zn(2+) site is built by His-640, Cys-642, and Glu-664. Catalysis depends on His-693, which acts as the Proton donor. Zn(2+) is bound at residue Cys-725.

Belongs to the vitamin-B12 independent methionine synthase family. It depends on Zn(2+) as a cofactor.

It catalyses the reaction 5-methyltetrahydropteroyltri-L-glutamate + L-homocysteine = tetrahydropteroyltri-L-glutamate + L-methionine. It functions in the pathway amino-acid biosynthesis; L-methionine biosynthesis via de novo pathway; L-methionine from L-homocysteine (MetE route): step 1/1. Its function is as follows. Catalyzes the transfer of a methyl group from 5-methyltetrahydrofolate to homocysteine resulting in methionine formation. This chain is 5-methyltetrahydropteroyltriglutamate--homocysteine methyltransferase, found in Rhodococcus jostii (strain RHA1).